The chain runs to 154 residues: Fluoride-specific ion channel FluC 1 (154 aa).

4 consecutive transmembrane segments (helical) span residues 28–48 (VVAV…AASL), 59–79 (WTTF…MVVI), 91–111 (PFFG…AVDS), and 124–144 (LAYL…AAWA). The Na(+) site is built by Gly-99 and Thr-102.

Belongs to the fluoride channel Fluc/FEX (TC 1.A.43) family.

The protein resides in the cell membrane. The enzyme catalyses fluoride(in) = fluoride(out). Its activity is regulated as follows. Na(+) is not transported, but it plays an essential structural role and its presence is essential for fluoride channel function. In terms of biological role, fluoride-specific ion channel. Important for reducing fluoride concentration in the cell, thus reducing its toxicity. This is Fluoride-specific ion channel FluC 1 from Streptomyces coelicolor (strain ATCC BAA-471 / A3(2) / M145).